A 449-amino-acid chain; its full sequence is Bifunctional protein GlmU (449 aa).

The interval 1–231 (MVRNCLSIVL…FDNVIGINNC (231 aa)) is pyrophosphorylase. Residues 10–13 (LAAG), Lys-24, Gln-77, and 82–83 (GT) each bind UDP-N-acetyl-alpha-D-glucosamine. Asp-107 is a binding site for Mg(2+). UDP-N-acetyl-alpha-D-glucosamine is bound by residues Gly-143, Glu-157, Asn-172, and Asn-229. Residue Asn-229 coordinates Mg(2+). The segment at 232-252 (FELFEADALWQKRKARDLMLS) is linker. The interval 253–449 (GVTILKPESV…AHLSKNKRNK (197 aa)) is N-acetyltransferase. Residues Arg-318 and Lys-336 each coordinate UDP-N-acetyl-alpha-D-glucosamine. Catalysis depends on His-348, which acts as the Proton acceptor. Residues Tyr-351 and Asn-362 each contribute to the UDP-N-acetyl-alpha-D-glucosamine site. Residues Ala-365, 371–372 (NY), Ser-390, Ser-408, and Arg-425 contribute to the acetyl-CoA site.

It in the N-terminal section; belongs to the N-acetylglucosamine-1-phosphate uridyltransferase family. This sequence in the C-terminal section; belongs to the transferase hexapeptide repeat family. As to quaternary structure, homotrimer. Mg(2+) is required as a cofactor.

It is found in the cytoplasm. The enzyme catalyses alpha-D-glucosamine 1-phosphate + acetyl-CoA = N-acetyl-alpha-D-glucosamine 1-phosphate + CoA + H(+). It carries out the reaction N-acetyl-alpha-D-glucosamine 1-phosphate + UTP + H(+) = UDP-N-acetyl-alpha-D-glucosamine + diphosphate. The protein operates within nucleotide-sugar biosynthesis; UDP-N-acetyl-alpha-D-glucosamine biosynthesis; N-acetyl-alpha-D-glucosamine 1-phosphate from alpha-D-glucosamine 6-phosphate (route II): step 2/2. Its pathway is nucleotide-sugar biosynthesis; UDP-N-acetyl-alpha-D-glucosamine biosynthesis; UDP-N-acetyl-alpha-D-glucosamine from N-acetyl-alpha-D-glucosamine 1-phosphate: step 1/1. It participates in bacterial outer membrane biogenesis; LPS lipid A biosynthesis. In terms of biological role, catalyzes the last two sequential reactions in the de novo biosynthetic pathway for UDP-N-acetylglucosamine (UDP-GlcNAc). The C-terminal domain catalyzes the transfer of acetyl group from acetyl coenzyme A to glucosamine-1-phosphate (GlcN-1-P) to produce N-acetylglucosamine-1-phosphate (GlcNAc-1-P), which is converted into UDP-GlcNAc by the transfer of uridine 5-monophosphate (from uridine 5-triphosphate), a reaction catalyzed by the N-terminal domain. This Bartonella bacilliformis (strain ATCC 35685 / KC583 / Herrer 020/F12,63) protein is Bifunctional protein GlmU.